Here is a 418-residue protein sequence, read N- to C-terminus: Glutamate dehydrogenase (418 aa).

The active site involves K105. Residue 217–223 participates in NAD(+) binding; sequence GYGNVGY.

This sequence belongs to the Glu/Leu/Phe/Val dehydrogenases family. In terms of assembly, homohexamer.

The protein resides in the cytoplasm. It carries out the reaction L-glutamate + NAD(+) + H2O = 2-oxoglutarate + NH4(+) + NADH + H(+). It catalyses the reaction L-glutamate + NADP(+) + H2O = 2-oxoglutarate + NH4(+) + NADPH + H(+). This is Glutamate dehydrogenase (gdhA) from Aeropyrum pernix (strain ATCC 700893 / DSM 11879 / JCM 9820 / NBRC 100138 / K1).